Here is an 842-residue protein sequence, read N- to C-terminus: Glycogen phosphorylase, muscle form (842 aa).

Serine 2 is modified (N-acetylserine). Serine 15 is subject to Phosphoserine; by PHK; in form phosphorylase A. AMP contacts are provided by aspartate 43 and tyrosine 76. 2 positions are modified to phosphotyrosine: tyrosine 204 and tyrosine 227. 310–319 (RRFKSSKFGS) is a binding site for AMP. Phosphoserine is present on serine 430. The residue at position 473 (tyrosine 473) is a Phosphotyrosine. Serine 514 bears the Phosphoserine mark. Lysine 681 carries the N6-(pyridoxal phosphate)lysine modification. A phosphoserine mark is found at serine 747 and serine 748.

This sequence belongs to the glycogen phosphorylase family. As to quaternary structure, homodimer. Homotetramer; to form the enzymatically active phosphorylase A. It depends on pyridoxal 5'-phosphate as a cofactor. In terms of processing, phosphorylation of Ser-15 converts phosphorylase B (unphosphorylated) to phosphorylase A.

The enzyme catalyses [(1-&gt;4)-alpha-D-glucosyl](n) + phosphate = [(1-&gt;4)-alpha-D-glucosyl](n-1) + alpha-D-glucose 1-phosphate. With respect to regulation, allosterically regulated through the non-covalent binding of metabolites, being activated by AMP and inhibited by ATP, ADP, and glucose-6-phosphate. The activity is also controlled by post-translational modifications including phosphorylation. Allosteric enzyme that catalyzes the rate-limiting step in glycogen catabolism, the phosphorolytic cleavage of glycogen to produce glucose-1-phosphate, and plays a central role in maintaining cellular and organismal glucose homeostasis. The chain is Glycogen phosphorylase, muscle form from Mus musculus (Mouse).